Consider the following 181-residue polypeptide: MVEELIALLIMASALGMDAFSIALGMGTLGLRFSQMFKVGLTIGVFHVIMPLMGMVAGKLLSAHLGLFANWLGAGLLLWLGLVMIVSPFQEKERTFVDPSGIGLFVFALSVSLDSLSAGLSLGMVGAKMALAVVAMGVMSTVLSWLGLFIGMRFQRYVGPYSELLGGFILCGFGVKLLLPY.

6 helical membrane passes run 5–25, 36–56, 66–86, 102–122, 130–150, and 158–178; these read LIAL…IALG, MFKV…MGMV, GLFA…VMIV, IGLF…GLSL, ALAV…GLFI, and VGPY…VKLL.

It belongs to the MntP (TC 9.B.29) family.

Its subcellular location is the cell membrane. Functionally, probably functions as a manganese efflux pump. The polypeptide is Putative manganese efflux pump MntP (Halalkalibacterium halodurans (strain ATCC BAA-125 / DSM 18197 / FERM 7344 / JCM 9153 / C-125) (Bacillus halodurans)).